The primary structure comprises 440 residues: uncharacterized protein (440 aa).

12 helical membrane passes run 24–44, 47–67, 93–113, 117–137, 155–175, 183–203, 229–249, 276–296, 323–343, 346–366, 379–399, and 400–420; these read VVIGLGSMIGAGIFAALAPAA, AGSGLLLGLAVAAVVAYCNAI, FWGYLAGWGFVVGKTASCAAM, VGFYVWPAQAHAVAVAVVVAL, IVAVVLVVLTAVVVAAYGSGA, IGVDAHVWGMLQAAGLLFFAF, LALGITLAVYALVAVAVIAVL, VVQIGAAVAALGSLLALILGV, PFRAELVVGAVVAALAATADI, AIGFSSFGVLVYYAIANASAL, IPLVGLIGCVVLAFALPLSSV, and AAGAAVLGVGVAAYGVRRIIT.

The protein belongs to the amino acid-polyamine-organocation (APC) superfamily.

It localises to the cell membrane. Probable amino-acid or metabolite transport protein. This is an uncharacterized protein from Mycobacterium bovis (strain ATCC BAA-935 / AF2122/97).